A 60-amino-acid polypeptide reads, in one-letter code: Metallothionein (60 aa).

Residues 1-28 (MDPCDCAKTGTCNCGTSCTCANCSCTKC) form a beta region. A divalent metal cation is bound by residues C4, C6, C12, C14, C18, C20, C23, C25, C28, C32, C33, C35, C36, C40, C43, C47, C49, C54, C58, and C59. The segment at 29-60 (KKSCCECCPSGCSKCASGCACKDKTCDTNCCQ) is alpha.

Belongs to the metallothionein superfamily. Type 1 family.

Functionally, metallothioneins have a high content of cysteine residues that bind various heavy metals. In Gadus morhua (Atlantic cod), this protein is Metallothionein (mt).